The primary structure comprises 350 residues: tRNA uridine(34) hydroxylase (350 aa).

Residues 146–240 (DDPDALFIDM…YARKAREQGL (95 aa)) form the Rhodanese domain. The Cysteine persulfide intermediate role is filled by C200.

The protein belongs to the TrhO family.

It catalyses the reaction uridine(34) in tRNA + AH2 + O2 = 5-hydroxyuridine(34) in tRNA + A + H2O. Its function is as follows. Catalyzes oxygen-dependent 5-hydroxyuridine (ho5U) modification at position 34 in tRNAs. This Shigella sonnei (strain Ss046) protein is tRNA uridine(34) hydroxylase.